Consider the following 256-residue polypeptide: Phosphatidylglycerol--prolipoprotein diacylglyceryl transferase (256 aa).

The next 3 membrane-spanning stretches (helical) occupy residues 19-39, 56-76, and 91-111; these read VHWYGLMYLIGFVGAWLLGYW, LIFYSALGVILGGRVGYMLFY, and IWEGGMSFHGGLLGVVIAAWL. R139 contacts a 1,2-diacyl-sn-glycero-3-phospho-(1'-sn-glycerol). A helical transmembrane segment spans residues 231 to 251; that stretch reads FGWLTMGQVLSIPMLLIGIWL.

This sequence belongs to the Lgt family.

It is found in the cell inner membrane. The catalysed reaction is L-cysteinyl-[prolipoprotein] + a 1,2-diacyl-sn-glycero-3-phospho-(1'-sn-glycerol) = an S-1,2-diacyl-sn-glyceryl-L-cysteinyl-[prolipoprotein] + sn-glycerol 1-phosphate + H(+). The protein operates within protein modification; lipoprotein biosynthesis (diacylglyceryl transfer). Functionally, catalyzes the transfer of the diacylglyceryl group from phosphatidylglycerol to the sulfhydryl group of the N-terminal cysteine of a prolipoprotein, the first step in the formation of mature lipoproteins. This chain is Phosphatidylglycerol--prolipoprotein diacylglyceryl transferase, found in Legionella pneumophila subsp. pneumophila (strain Philadelphia 1 / ATCC 33152 / DSM 7513).